The following is a 663-amino-acid chain: Probable rhamnogalacturonate lyase B (663 aa).

Residues 1-19 form the signal peptide; it reads MRLRTSLGVASACASVASA. 10 N-linked (GlcNAc...) asparagine glycosylation sites follow: Asn27, Asn110, Asn143, Asn239, Asn285, Asn495, Asn535, Asn569, Asn597, and Asn638.

The protein belongs to the polysaccharide lyase 4 family.

It localises to the secreted. The catalysed reaction is Endotype eliminative cleavage of L-alpha-rhamnopyranosyl-(1-&gt;4)-alpha-D-galactopyranosyluronic acid bonds of rhamnogalacturonan I domains in ramified hairy regions of pectin leaving L-rhamnopyranose at the reducing end and 4-deoxy-4,5-unsaturated D-galactopyranosyluronic acid at the non-reducing end.. Pectinolytic enzymes consist of four classes of enzymes: pectin lyase, polygalacturonase, pectin methylesterase and rhamnogalacturonase. Degrades the rhamnogalacturonan I (RG-I) backbone of pectin. This Aspergillus flavus (strain ATCC 200026 / FGSC A1120 / IAM 13836 / NRRL 3357 / JCM 12722 / SRRC 167) protein is Probable rhamnogalacturonate lyase B (rglB).